The following is a 171-amino-acid chain: Probable chorismate pyruvate-lyase (171 aa).

Residues Met-36, Arg-78, Leu-116, and Glu-157 each coordinate substrate.

The protein belongs to the UbiC family.

The protein localises to the cytoplasm. The catalysed reaction is chorismate = 4-hydroxybenzoate + pyruvate. The protein operates within cofactor biosynthesis; ubiquinone biosynthesis. In terms of biological role, removes the pyruvyl group from chorismate, with concomitant aromatization of the ring, to provide 4-hydroxybenzoate (4HB) for the ubiquinone pathway. The sequence is that of Probable chorismate pyruvate-lyase from Bartonella bacilliformis (strain ATCC 35685 / KC583 / Herrer 020/F12,63).